The following is a 237-amino-acid chain: Phosphoribosylaminoimidazole-succinocarboxamide synthase (237 aa).

It belongs to the SAICAR synthetase family.

It catalyses the reaction 5-amino-1-(5-phospho-D-ribosyl)imidazole-4-carboxylate + L-aspartate + ATP = (2S)-2-[5-amino-1-(5-phospho-beta-D-ribosyl)imidazole-4-carboxamido]succinate + ADP + phosphate + 2 H(+). Its pathway is purine metabolism; IMP biosynthesis via de novo pathway; 5-amino-1-(5-phospho-D-ribosyl)imidazole-4-carboxamide from 5-amino-1-(5-phospho-D-ribosyl)imidazole-4-carboxylate: step 1/2. This is Phosphoribosylaminoimidazole-succinocarboxamide synthase from Psychrobacter arcticus (strain DSM 17307 / VKM B-2377 / 273-4).